The primary structure comprises 283 residues: Polyamine aminopropyltransferase (283 aa).

The region spanning 2–237 is the PABS domain; that stretch reads ELWYTDQHTK…GHWLFGFASK (236 aa). An S-methyl-5'-thioadenosine-binding site is contributed by Q31. H62 and D86 together coordinate spermidine. S-methyl-5'-thioadenosine is bound by residues E106 and 137–138; that span reads EG. D155 (proton acceptor) is an active-site residue. Spermidine is bound at residue 155–158; the sequence is DCAD. Position 162 (P162) interacts with S-methyl-5'-thioadenosine.

The protein belongs to the spermidine/spermine synthase family. In terms of assembly, homodimer or homotetramer.

Its subcellular location is the cytoplasm. It catalyses the reaction S-adenosyl 3-(methylsulfanyl)propylamine + putrescine = S-methyl-5'-thioadenosine + spermidine + H(+). The protein operates within amine and polyamine biosynthesis; spermidine biosynthesis; spermidine from putrescine: step 1/1. Functionally, catalyzes the irreversible transfer of a propylamine group from the amino donor S-adenosylmethioninamine (decarboxy-AdoMet) to putrescine (1,4-diaminobutane) to yield spermidine. The protein is Polyamine aminopropyltransferase of Lachnoclostridium phytofermentans (strain ATCC 700394 / DSM 18823 / ISDg) (Clostridium phytofermentans).